A 396-amino-acid polypeptide reads, in one-letter code: Ornithine aminotransferase 2 (396 aa).

An N6-(pyridoxal phosphate)lysine modification is found at lysine 255.

This sequence belongs to the class-III pyridoxal-phosphate-dependent aminotransferase family. OAT subfamily. It depends on pyridoxal 5'-phosphate as a cofactor.

The protein localises to the cytoplasm. The enzyme catalyses a 2-oxocarboxylate + L-ornithine = L-glutamate 5-semialdehyde + an L-alpha-amino acid. It functions in the pathway amino-acid biosynthesis; L-proline biosynthesis; L-glutamate 5-semialdehyde from L-ornithine: step 1/1. Functionally, catalyzes the interconversion of ornithine to glutamate semialdehyde. The polypeptide is Ornithine aminotransferase 2 (Staphylococcus aureus (strain COL)).